A 104-amino-acid chain; its full sequence is Flagellar hook-basal body complex protein FliE (104 aa).

Belongs to the FliE family.

The protein resides in the bacterial flagellum basal body. The polypeptide is Flagellar hook-basal body complex protein FliE (Salmonella heidelberg (strain SL476)).